The sequence spans 475 residues: Ribulose bisphosphate carboxylase large chain (475 aa).

A propeptide spanning residues 1-2 is cleaved from the precursor; it reads MS. Position 3 is an N-acetylproline (proline 3). Position 14 is an N6,N6,N6-trimethyllysine (lysine 14). Substrate is bound by residues asparagine 123 and threonine 173. The active-site Proton acceptor is lysine 175. Residue lysine 177 participates in substrate binding. Lysine 201, aspartate 203, and glutamate 204 together coordinate Mg(2+). The residue at position 201 (lysine 201) is an N6-carboxylysine. Catalysis depends on histidine 294, which acts as the Proton acceptor. 3 residues coordinate substrate: arginine 295, histidine 327, and serine 379.

This sequence belongs to the RuBisCO large chain family. Type I subfamily. In terms of assembly, heterohexadecamer of 8 large chains and 8 small chains; disulfide-linked. The disulfide link is formed within the large subunit homodimers. Requires Mg(2+) as cofactor. The disulfide bond which can form in the large chain dimeric partners within the hexadecamer appears to be associated with oxidative stress and protein turnover.

The protein resides in the plastid. It is found in the chloroplast. It carries out the reaction 2 (2R)-3-phosphoglycerate + 2 H(+) = D-ribulose 1,5-bisphosphate + CO2 + H2O. The enzyme catalyses D-ribulose 1,5-bisphosphate + O2 = 2-phosphoglycolate + (2R)-3-phosphoglycerate + 2 H(+). Its function is as follows. RuBisCO catalyzes two reactions: the carboxylation of D-ribulose 1,5-bisphosphate, the primary event in carbon dioxide fixation, as well as the oxidative fragmentation of the pentose substrate in the photorespiration process. Both reactions occur simultaneously and in competition at the same active site. This chain is Ribulose bisphosphate carboxylase large chain, found in Afrocarpus gracilior (African fern pine).